A 197-amino-acid polypeptide reads, in one-letter code: Dephospho-CoA kinase (197 aa).

Residues R5–A197 form the DPCK domain. G13–T18 contacts ATP.

The protein belongs to the CoaE family.

Its subcellular location is the cytoplasm. The catalysed reaction is 3'-dephospho-CoA + ATP = ADP + CoA + H(+). Its pathway is cofactor biosynthesis; coenzyme A biosynthesis; CoA from (R)-pantothenate: step 5/5. Catalyzes the phosphorylation of the 3'-hydroxyl group of dephosphocoenzyme A to form coenzyme A. This Cereibacter sphaeroides (strain ATCC 17023 / DSM 158 / JCM 6121 / CCUG 31486 / LMG 2827 / NBRC 12203 / NCIMB 8253 / ATH 2.4.1.) (Rhodobacter sphaeroides) protein is Dephospho-CoA kinase.